Here is a 634-residue protein sequence, read N- to C-terminus: Proline and serine-rich protein 3 (634 aa).

Disordered regions lie at residues 1–69, 81–142, 185–242, 368–455, and 472–534; these read MFPK…LIDN, FRQA…TSLA, DASS…ATLK, VPPT…FEGP, and FPDS…TAPK. Positions 15–24 are enriched in polar residues; sequence RTGATRSQRP. Composition is skewed to low complexity over residues 40 to 56, 128 to 140, and 185 to 202; these read ESWP…STTE, VTGP…SSTS, and DASS…SPSS. A compositionally biased stretch (polar residues) spans 203-215; it reads VTFNPDSNKSSNP. Residues 368–377 are compositionally biased toward low complexity; that stretch reads VPPTSTSTTP. Residues 378–399 show a composition bias toward pro residues; sequence APTPTPQVCIPGPPTSAPPPCA. Over residues 436-448 the composition is skewed to polar residues; the sequence is VSTSSHQKTTVPD. Over residues 503–515 the composition is skewed to basic and acidic residues; the sequence is PESRRGSKTESRK. Ser-588 carries the phosphoserine modification.

Its subcellular location is the cytoplasm. The protein localises to the cytoskeleton. The protein resides in the microtubule organizing center. It is found in the centrosome. This is Proline and serine-rich protein 3 (Proser3) from Mus musculus (Mouse).